We begin with the raw amino-acid sequence, 411 residues long: MARDLKDCRVPCKLLLEDLQALCRRKKLVCKQLSVTKNNFNDYEVEYLCNYKKHKGREFFLVKWKGYEESENTWEPLKNLKCPILLHQFRKDMKAALLQANEPLDSASLSGPIISFLRQKATQRIRLKKWEDLMNQTCWHKGRIFVSNEVDMDGPPKNFTYINENKLGKGVDMNAVIVGCECEDCVSQPVDGCCPGLLKFRRAYNESRRVKVMPGVPIYECNSKCRCGPDCANRVVQRGIQYDLCIFKTDNGRGWGVRTLQRINKNSFVMEYLGEIITTDEAEQRGVLYDKQGVTYLFDLDYVDDVYTIDAAHYGNISHFVNHSCDPNLQVYNVFIDNLDERLPRIALFAKRGIKAGEELTFDYKMTVDPVDAESTKMDLDFSRAGIEGSPIKRVHMECKCGVRNCRKYLF.

One can recognise a Chromo domain in the interval 43–101 (YEVEYLCNYKKHKGREFFLVKWKGYEESENTWEPLKNLKCPILLHQFRKDMKAALLQAN). The 62-residue stretch at 178 to 239 (VGCECEDCVS…DCANRVVQRG (62 aa)) folds into the Pre-SET domain. Positions 180, 182, 185, 193, 194, 221, 225, 227, and 231 each coordinate Zn(2+). The region spanning 242 to 365 (YDLCIFKTDN…AGEELTFDYK (124 aa)) is the SET domain. S-adenosyl-L-methionine-binding positions include 253–255 (RGW), Tyr-296, and 322–323 (NH). Zn(2+)-binding residues include Cys-325, Cys-399, Cys-401, and Cys-406. The 17-residue stretch at 395-411 (VHMECKCGVRNCRKYLF) folds into the Post-SET domain.

The protein belongs to the class V-like SAM-binding methyltransferase superfamily. Histone-lysine methyltransferase family. Suvar3-9 subfamily. As to expression, expressed ubuitiously.

The protein localises to the nucleus. It localises to the chromosome. The protein resides in the centromere. It catalyses the reaction N(6)-methyl-L-lysyl(9)-[histone H3] + S-adenosyl-L-methionine = N(6),N(6)-dimethyl-L-lysyl(9)-[histone H3] + S-adenosyl-L-homocysteine + H(+). The catalysed reaction is N(6),N(6)-dimethyl-L-lysyl(9)-[histone H3] + S-adenosyl-L-methionine = N(6),N(6),N(6)-trimethyl-L-lysyl(9)-[histone H3] + S-adenosyl-L-homocysteine + H(+). Functionally, histone methyltransferase that specifically trimethylates 'Lys-9' of histone H3 using monomethylated H3 'Lys-9' as substrate. H3 'Lys-9' trimethylation represents a specific tag for epigenetic transcriptional repression by recruiting HP1 (CBX1, CBX3 and/or CBX5) proteins to methylated histones. Mainly functions in heterochromatin regions, thereby playing a central role in the establishment of constitutive heterochromatin at pericentric and telomere regions. H3 'Lys-9' trimethylation is also required to direct DNA methylation at pericentric repeats. SUV39H1 is targeted to histone H3 via its interaction with RB1 and is involved in many processes, such as regulation of organ-specific terminal differentiation during development. The polypeptide is Histone-lysine N-methyltransferase SUV39H1-A (suv39h1a) (Danio rerio (Zebrafish)).